Consider the following 985-residue polypeptide: Rho guanine nucleotide exchange factor 2 (985 aa).

The segment at 1-32 (MSRIESLTRARIDRSKEQATKTREKEKMKEAK) is disordered. The Phorbol-ester/DAG-type zinc finger occupies 39-86 (GHLFTTISVSGMTMCYACNKSITAKEALICPTCNVTIHNRCKDTLANC). Residues serine 109, serine 122, serine 129, serine 133, and serine 137 each carry the phosphoserine modification. Residues 131–161 (RQSLLGSRRGLSSLSLAKSVSTTNIAGHFND) form an interaction with DYNLT1 region. Serine 143 carries the phosphoserine; by PAK4 modification. Phosphoserine is present on residues serine 151, serine 163, serine 172, serine 174, and serine 177. One can recognise a DH domain in the interval 236–433 (KKQDVIYELI…KELLSNVDQD (198 aa)). An N6-acetyllysine modification is found at lysine 354. Residues 473-572 (KLIHEGCLLW…WIRVIQQSVR (100 aa)) enclose the PH domain. The stretch at 591–619 (LRRIKTKLQQKNQALVELLQKNVELFAEM) forms a coiled coil. Phosphoserine is present on residues serine 646 and serine 649. Threonine 680 carries the phosphothreonine; by MAPK1 or MAPK3 modification. A phosphoserine mark is found at serine 692, serine 710, and serine 781. Threonine 795 is modified (phosphothreonine). Residues 797 to 866 (EKQATELALL…RQLAALGQNE (70 aa)) adopt a coiled-coil conformation. Residue serine 885 is modified to Phosphoserine. 2 disordered regions span residues 890 to 909 (DALY…DRLD) and 918 to 985 (HRPF…ASES). Tyrosine 893 carries the post-translational modification Phosphotyrosine. Serine 895 is subject to Phosphoserine; by PAK4. The segment covering 919–938 (RPFDDREAQELGSPEDRLQD) has biased composition (basic and acidic residues). 3 positions are modified to phosphoserine: serine 931, serine 939, and serine 940. The segment covering 940–949 (SDPDTGSEEE) has biased composition (acidic residues). Threonine 944 carries the phosphothreonine modification. 5 positions are modified to phosphoserine: serine 946, serine 951, serine 952, serine 955, and serine 959.

Found in a complex composed at least of ARHGEF2, NOD2 and RIPK2. Interacts with RIPK2; the interaction mediates tyrosine phosphorylation of RIPK2 by Src kinase CSK. Interacts with RIPK1 and RIPK3. Interacts with YWHAZ/14-3-3 zeta; when phosphorylated at Ser-885. Interacts with the kinases PAK4, AURKA and MAPK1. Interacts with RHOA and RAC1. Interacts with NOD1. Interacts (via the N- terminal zinc finger) with CAPN6 (via domain II). Interacts with DYNLT1. In terms of processing, phosphorylation of Ser-885 by PAK1 induces binding to protein YWHAZ, promoting its relocation to microtubules and the inhibition of its activity. Phosphorylated by AURKA and CDK1 during mitosis, which negatively regulates its activity. Phosphorylation by MAPK1 or MAPK3 increases nucleotide exchange activity. Phosphorylation by PAK4 releases GEF-H1 from the microtubules. Phosphorylated on serine, threonine and tyrosine residues in a RIPK2-dependent manner. In terms of tissue distribution, ubiquitous, with the exception of liver tissue. Levels are high in hemopoietic tissues (thymus, spleen, bone marrow) as well as in kidney and lung. Expressed in the germinal zones of both the neocortex and the cerebellum and in the pontine gray nuclei.

Its subcellular location is the cytoplasm. The protein resides in the cytoskeleton. The protein localises to the cell junction. It localises to the tight junction. It is found in the golgi apparatus. Its subcellular location is the spindle. The protein resides in the cytoplasmic vesicle. In terms of biological role, activates Rho-GTPases by promoting the exchange of GDP for GTP. May be involved in epithelial barrier permeability, cell motility and polarization, dendritic spine morphology, antigen presentation, leukemic cell differentiation, cell cycle regulation, innate immune response, and cancer. Binds Rac-GTPases, but does not seem to promote nucleotide exchange activity toward Rac-GTPases. May stimulate instead the cortical activity of Rac. Inactive toward CDC42, TC10, or Ras-GTPases. Forms an intracellular sensing system along with NOD1 for the detection of microbial effectors during cell invasion by pathogens. Involved in innate immune signaling transduction pathway promoting cytokine IL6/interleukin-6 and TNF-alpha secretion in macrophage upon stimulation by bacterial peptidoglycans; acts as a signaling intermediate between NOD2 receptor and RIPK2 kinase. Contributes to the tyrosine phosphorylation of RIPK2 through Src tyrosine kinase leading to NF-kappaB activation by NOD2. Overexpression activates Rho-, but not Rac-GTPases, and increases paracellular permeability. Involved in neuronal progenitor cell division and differentiation. Involved in the migration of precerebellar neurons. The polypeptide is Rho guanine nucleotide exchange factor 2 (Arhgef2) (Mus musculus (Mouse)).